The primary structure comprises 576 residues: D-lactate dehydrogenase [cytochrome], mitochondrial (576 aa).

Residues 139–320 form the FAD-binding PCMH-type domain; the sequence is EANQRPEIVL…TEATIKCHVR (182 aa).

This sequence belongs to the FAD-binding oxidoreductase/transferase type 4 family. It depends on FAD as a cofactor. Zn(2+) is required as a cofactor.

It localises to the mitochondrion matrix. The catalysed reaction is (R)-lactate + 2 Fe(III)-[cytochrome c] = 2 Fe(II)-[cytochrome c] + pyruvate + 2 H(+). In terms of biological role, catalyzes the stereospecific oxidation of D-lactate to pyruvate. This is D-lactate dehydrogenase [cytochrome], mitochondrial (DLD1) from Kluyveromyces lactis (strain ATCC 8585 / CBS 2359 / DSM 70799 / NBRC 1267 / NRRL Y-1140 / WM37) (Yeast).